Consider the following 226-residue polypeptide: Cysteine and histidine-rich domain-containing protein RAR1 (226 aa).

The Zn(2+) site is built by cysteine 12, cysteine 17, cysteine 31, histidine 34, cysteine 49, cysteine 50, cysteine 66, and histidine 71. In terms of domain architecture, CHORD 1 spans 12-71; the sequence is CQRIGCNAMFTDDDNPQGSCQFHASGPFFHDGMKEWSCCKQRSHDFSLFLEIPGCKTGKH. Residues 104-124 carry the CCCH motif; the sequence is CSRCRQGFFCSDHGSQPKEQI. The Zn(2+) site is built by cysteine 159, cysteine 164, cysteine 178, histidine 181, cysteine 196, cysteine 197, cysteine 213, and histidine 218. The CHORD 2 domain occupies 159–218; that stretch reads CKNKGCGQTFKERDNHETACSHHPGPAVFHDRLRGWKCCDVHVKEFDEFMEIPPCTKGWH.

In terms of assembly, interacts with HSP90-1, HSP90-2, SGT1A and SGT1B. Forms a ternary complex with SGT1A and barley HSP90.

Its function is as follows. Required specifically for plant innate immunity. Is essential for resistance conferred by multiple R genes recognizing different bacterial and oomycete pathogen isolates like avirulent P.syringae or H.parasitica (downy mildew). Contributes additively with SGT1B to RPP5-dependent resistance. Functions as a positive regulator of RPS5 accumulation by assisting its stabilization. May function as co-chaperone of HSP90-2 to positively regulate the steady-state accumulation of RPM1 and protect it from SGT1-mediated degradation. Acts as a negative regulator of pathogen-associated molecular pattern (PAMP)-triggered immunity. This chain is Cysteine and histidine-rich domain-containing protein RAR1 (RAR1), found in Arabidopsis thaliana (Mouse-ear cress).